A 116-amino-acid chain; its full sequence is Ribosome-binding factor A (116 aa).

It belongs to the RbfA family. Monomer. Binds 30S ribosomal subunits, but not 50S ribosomal subunits or 70S ribosomes.

The protein localises to the cytoplasm. Its function is as follows. One of several proteins that assist in the late maturation steps of the functional core of the 30S ribosomal subunit. Associates with free 30S ribosomal subunits (but not with 30S subunits that are part of 70S ribosomes or polysomes). Required for efficient processing of 16S rRNA. May interact with the 5'-terminal helix region of 16S rRNA. In Ureaplasma urealyticum serovar 10 (strain ATCC 33699 / Western), this protein is Ribosome-binding factor A.